The primary structure comprises 291 residues: Proteasome subunit beta (291 aa).

Positions 1 to 57 (MTWPLPDRLSINSLSGTPAVDLSSFTDFLRRQAPELLPASISGGAPLAGGDAQLPHG) are cleaved as a propeptide — removed in mature form; by autocatalysis. The Nucleophile role is filled by Thr-58.

Belongs to the peptidase T1B family. In terms of assembly, the 20S proteasome core is composed of 14 alpha and 14 beta subunits that assemble into four stacked heptameric rings, resulting in a barrel-shaped structure. The two inner rings, each composed of seven catalytic beta subunits, are sandwiched by two outer rings, each composed of seven alpha subunits. The catalytic chamber with the active sites is on the inside of the barrel. Has a gated structure, the ends of the cylinder being occluded by the N-termini of the alpha-subunits. Is capped by the proteasome-associated ATPase, ARC.

It localises to the cytoplasm. The catalysed reaction is Cleavage of peptide bonds with very broad specificity.. Its pathway is protein degradation; proteasomal Pup-dependent pathway. The formation of the proteasomal ATPase ARC-20S proteasome complex, likely via the docking of the C-termini of ARC into the intersubunit pockets in the alpha-rings, may trigger opening of the gate for substrate entry. Interconversion between the open-gate and close-gate conformations leads to a dynamic regulation of the 20S proteasome proteolysis activity. Component of the proteasome core, a large protease complex with broad specificity involved in protein degradation. In Mycobacterium tuberculosis (strain ATCC 25177 / H37Ra), this protein is Proteasome subunit beta.